A 541-amino-acid polypeptide reads, in one-letter code: Chlorophyllide a oxygenase, chloroplastic (541 aa).

Residues 114–151 are a coiled coil; it reads LAREFKSIGTLRKELAELQEELAKAHNQVHLSETRVSS. A compositionally biased stretch (polar residues) spans 178-192; sequence AECTSLAPSTSSASR. The interval 178–208 is disordered; sequence AECTSLAPSTSSASRVVNKKPPRRSLNVSGP. Residues 220–320 enclose the Rieske domain; it reads WYPVAFSSDL…CFEQEGMVWI (101 aa). The [2Fe-2S] cluster site is built by cysteine 261, histidine 263, cysteine 280, and histidine 283. Positions 359, 363, 366, and 371 each coordinate Fe cation.

As to expression, expressed in leaves and germinating seedlings, but not in sheaths and roots.

The protein resides in the plastid. It is found in the chloroplast membrane. Its subcellular location is the chloroplast thylakoid membrane. It carries out the reaction chlorophyllide a + 2 NADPH + 2 O2 + 2 H(+) = chlorophyllide b + 2 NADP(+) + 3 H2O. In terms of biological role, catalyzes a two-step oxygenase reaction involved in the synthesis of chlorophyll b. Acts specifically on the non-esterified chlorophyllide a and not on chlorophyll a. The protein is Chlorophyllide a oxygenase, chloroplastic (CAO) of Oryza sativa subsp. japonica (Rice).